A 554-amino-acid polypeptide reads, in one-letter code: ATP synthase subunit alpha (554 aa).

173 to 180 is an ATP binding site; the sequence is GDRQTGKT. The interval 531–554 is disordered; that stretch reads SHLAAEKVRKHVPPSKPTTQRTAG.

This sequence belongs to the ATPase alpha/beta chains family. As to quaternary structure, F-type ATPases have 2 components, CF(1) - the catalytic core - and CF(0) - the membrane proton channel. CF(1) has five subunits: alpha(3), beta(3), gamma(1), delta(1), epsilon(1). CF(0) has three main subunits: a(1), b(2) and c(9-12). The alpha and beta chains form an alternating ring which encloses part of the gamma chain. CF(1) is attached to CF(0) by a central stalk formed by the gamma and epsilon chains, while a peripheral stalk is formed by the delta and b chains.

It localises to the cell membrane. It catalyses the reaction ATP + H2O + 4 H(+)(in) = ADP + phosphate + 5 H(+)(out). Its function is as follows. Produces ATP from ADP in the presence of a proton gradient across the membrane. The alpha chain is a regulatory subunit. The polypeptide is ATP synthase subunit alpha (Acidothermus cellulolyticus (strain ATCC 43068 / DSM 8971 / 11B)).